The chain runs to 358 residues: Phosphoribosylformylglycinamidine cyclo-ligase (358 aa).

The protein belongs to the AIR synthase family.

It localises to the cytoplasm. The enzyme catalyses 2-formamido-N(1)-(5-O-phospho-beta-D-ribosyl)acetamidine + ATP = 5-amino-1-(5-phospho-beta-D-ribosyl)imidazole + ADP + phosphate + H(+). It functions in the pathway purine metabolism; IMP biosynthesis via de novo pathway; 5-amino-1-(5-phospho-D-ribosyl)imidazole from N(2)-formyl-N(1)-(5-phospho-D-ribosyl)glycinamide: step 2/2. The chain is Phosphoribosylformylglycinamidine cyclo-ligase from Nitrosococcus oceani (strain ATCC 19707 / BCRC 17464 / JCM 30415 / NCIMB 11848 / C-107).